A 343-amino-acid polypeptide reads, in one-letter code: Holliday junction branch migration complex subunit RuvB (343 aa).

A large ATPase domain (RuvB-L) region spans residues 4-193 (TDNLTAAQPQ…FGIVSRLEFY (190 aa)). ATP-binding positions include Leu-32, Arg-33, Gly-74, Lys-77, Thr-78, Thr-79, 140–142 (EDY), Arg-183, Tyr-193, and Arg-230. A Mg(2+)-binding site is contributed by Thr-78. The interval 194–264 (ENRDLATIVS…IADAALSMLD (71 aa)) is small ATPAse domain (RuvB-S). The interval 267–343 (VQGLDVMDRK…YLHFGLPVEK (77 aa)) is head domain (RuvB-H). Positions 322 and 327 each coordinate DNA.

The protein belongs to the RuvB family. In terms of assembly, homohexamer. Forms an RuvA(8)-RuvB(12)-Holliday junction (HJ) complex. HJ DNA is sandwiched between 2 RuvA tetramers; dsDNA enters through RuvA and exits via RuvB. An RuvB hexamer assembles on each DNA strand where it exits the tetramer. Each RuvB hexamer is contacted by two RuvA subunits (via domain III) on 2 adjacent RuvB subunits; this complex drives branch migration. In the full resolvosome a probable DNA-RuvA(4)-RuvB(12)-RuvC(2) complex forms which resolves the HJ.

It localises to the cytoplasm. It catalyses the reaction ATP + H2O = ADP + phosphate + H(+). Its function is as follows. The RuvA-RuvB-RuvC complex processes Holliday junction (HJ) DNA during genetic recombination and DNA repair, while the RuvA-RuvB complex plays an important role in the rescue of blocked DNA replication forks via replication fork reversal (RFR). RuvA specifically binds to HJ cruciform DNA, conferring on it an open structure. The RuvB hexamer acts as an ATP-dependent pump, pulling dsDNA into and through the RuvAB complex. RuvB forms 2 homohexamers on either side of HJ DNA bound by 1 or 2 RuvA tetramers; 4 subunits per hexamer contact DNA at a time. Coordinated motions by a converter formed by DNA-disengaged RuvB subunits stimulates ATP hydrolysis and nucleotide exchange. Immobilization of the converter enables RuvB to convert the ATP-contained energy into a lever motion, pulling 2 nucleotides of DNA out of the RuvA tetramer per ATP hydrolyzed, thus driving DNA branch migration. The RuvB motors rotate together with the DNA substrate, which together with the progressing nucleotide cycle form the mechanistic basis for DNA recombination by continuous HJ branch migration. Branch migration allows RuvC to scan DNA until it finds its consensus sequence, where it cleaves and resolves cruciform DNA. The polypeptide is Holliday junction branch migration complex subunit RuvB (Neisseria meningitidis serogroup A / serotype 4A (strain DSM 15465 / Z2491)).